The chain runs to 374 residues: Queuine tRNA-ribosyltransferase (374 aa).

The Proton acceptor role is filled by aspartate 89. Residues 89–93, aspartate 143, glutamine 187, and glycine 214 contribute to the substrate site; that span reads DSGGF. The tract at residues 245 to 251 is RNA binding; that stretch reads GVGKPED. Residue aspartate 264 is the Nucleophile of the active site. The tract at residues 269 to 273 is RNA binding; important for wobble base 34 recognition; sequence TRNAR. Zn(2+) contacts are provided by cysteine 302, cysteine 304, cysteine 307, and histidine 333.

The protein belongs to the queuine tRNA-ribosyltransferase family. In terms of assembly, homodimer. Within each dimer, one monomer is responsible for RNA recognition and catalysis, while the other monomer binds to the replacement base PreQ1. Zn(2+) serves as cofactor.

It catalyses the reaction 7-aminomethyl-7-carbaguanine + guanosine(34) in tRNA = 7-aminomethyl-7-carbaguanosine(34) in tRNA + guanine. The protein operates within tRNA modification; tRNA-queuosine biosynthesis. In terms of biological role, catalyzes the base-exchange of a guanine (G) residue with the queuine precursor 7-aminomethyl-7-deazaguanine (PreQ1) at position 34 (anticodon wobble position) in tRNAs with GU(N) anticodons (tRNA-Asp, -Asn, -His and -Tyr). Catalysis occurs through a double-displacement mechanism. The nucleophile active site attacks the C1' of nucleotide 34 to detach the guanine base from the RNA, forming a covalent enzyme-RNA intermediate. The proton acceptor active site deprotonates the incoming PreQ1, allowing a nucleophilic attack on the C1' of the ribose to form the product. After dissociation, two additional enzymatic reactions on the tRNA convert PreQ1 to queuine (Q), resulting in the hypermodified nucleoside queuosine (7-(((4,5-cis-dihydroxy-2-cyclopenten-1-yl)amino)methyl)-7-deazaguanosine). The sequence is that of Queuine tRNA-ribosyltransferase from Shewanella sp. (strain W3-18-1).